The primary structure comprises 391 residues: MAEKLIPSCRGQWFLPARVLREGFLRARPVAVDGGFKLTIGPLTVATRVWDWVYVHYNENATDWLRGMNPPFWEEPCDVLDFLPGVACVNEATFLTLKKKYGSYLHLFVPLRHTRGNIFFGFSPLSATGMAVLKIKTFHGGTQAPDRPGVPMEVYAWETAHFLDAAPKLIEWEVSGTRENRKSAQMVTFSECGLYGSMEGYFYRERATVDICATILADLTGKLLALIRKGIYHGDLKSENIIMMSRSGPGKLIDFEHSHGPGETMTSFWYPDRTFFWNPIGTEAYAPPERSRGRGRNAGVPGIVFQIGLIALNIMVERMERVFVNHTWIKGDGYRAHVLKVIKARGTLDLRGGARTLARVDELIGLVARCLERDPAMRPSLETLVDEFSKI.

Residues 109–391 (VPLRHTRGNI…ETLVDEFSKI (283 aa)) form the Protein kinase domain. Residue Lys134 coordinates ATP. The Proton acceptor role is filled by Asp235.

It belongs to the protein kinase superfamily. Ser/Thr protein kinase family.

The catalysed reaction is L-seryl-[protein] + ATP = O-phospho-L-seryl-[protein] + ADP + H(+). It catalyses the reaction L-threonyl-[protein] + ATP = O-phospho-L-threonyl-[protein] + ADP + H(+). The protein is Protein kinase ORF14 (ORF14) of Ictalurid herpesvirus 1 (strain Auburn) (IcHV-1).